Reading from the N-terminus, the 96-residue chain is uncharacterized protein (96 aa).

Residues 57-96 (MTKKVRTTKKDASISDAAALMDKHNVNRLPVVDENNKLVL) enclose the CBS domain.

This is an uncharacterized protein from Methanobacterium ivanovii.